The following is a 419-amino-acid chain: uncharacterized protein (419 aa).

Transmembrane regions (helical) follow at residues 5–25, 26–46, 53–73, 102–122, 144–164, 170–190, 210–230, 234–254, 274–294, 309–329, 332–352, 360–380, and 396–416; these read MIIVFCALMMLAVPVGYALII, AAGVAVLFNGYLPLSIVAQQI, FPMLALPFFMLAGTLMLGGEL, VFGGVSGSAVANASALGSVLI, VIDVLIPPSIPMILFSLVSGV, FVAGILPGILMAASFVFVCWF, ATLALKSLPAVLLPVLIILFL, LATPTEVAVLSVVYSLALSLL, ATGVVMLVIMGSAAVGWVLTF, ISSPIVIILMMNILMLIVGMP, MPPAILLLGPIFVPLADTIGL, MMVINLGIGLYTPPIGTTLFI, and LWPFFAMAMTLLLAVSFIPAL.

Belongs to the YiaN/YgiK family.

The protein localises to the cell inner membrane. This is an uncharacterized protein from Sinorhizobium fredii (strain NBRC 101917 / NGR234).